The sequence spans 399 residues: Dual-specificity RNA methyltransferase RlmN (399 aa).

Glu-122 acts as the Proton acceptor in catalysis. A Radical SAM core domain is found at 128 to 371 (ETDRGTLCVS…VRTPRGRDIL (244 aa)). Residues Cys-135 and Cys-374 are joined by a disulfide bond. [4Fe-4S] cluster-binding residues include Cys-142, Cys-146, and Cys-149. Residues 200–201 (GE), Ser-232, 254–256 (SLH), and Asn-331 each bind S-adenosyl-L-methionine. Cys-374 acts as the S-methylcysteine intermediate in catalysis.

The protein belongs to the radical SAM superfamily. RlmN family. [4Fe-4S] cluster serves as cofactor.

It localises to the cytoplasm. The enzyme catalyses adenosine(2503) in 23S rRNA + 2 reduced [2Fe-2S]-[ferredoxin] + 2 S-adenosyl-L-methionine = 2-methyladenosine(2503) in 23S rRNA + 5'-deoxyadenosine + L-methionine + 2 oxidized [2Fe-2S]-[ferredoxin] + S-adenosyl-L-homocysteine. It catalyses the reaction adenosine(37) in tRNA + 2 reduced [2Fe-2S]-[ferredoxin] + 2 S-adenosyl-L-methionine = 2-methyladenosine(37) in tRNA + 5'-deoxyadenosine + L-methionine + 2 oxidized [2Fe-2S]-[ferredoxin] + S-adenosyl-L-homocysteine. Its function is as follows. Specifically methylates position 2 of adenine 2503 in 23S rRNA and position 2 of adenine 37 in tRNAs. m2A2503 modification seems to play a crucial role in the proofreading step occurring at the peptidyl transferase center and thus would serve to optimize ribosomal fidelity. The sequence is that of Dual-specificity RNA methyltransferase RlmN from Rhodopseudomonas palustris (strain TIE-1).